The following is a 226-amino-acid chain: PKHD-type hydroxylase HNE_2117 (226 aa).

The 101-residue stretch at 78–178 (TVLTPRFNRY…RLASFLWTQS (101 aa)) folds into the Fe2OG dioxygenase domain. Fe cation contacts are provided by H96, D98, and H159. R169 serves as a coordination point for 2-oxoglutarate.

The cofactor is Fe(2+). Requires L-ascorbate as cofactor.

The protein is PKHD-type hydroxylase HNE_2117 of Hyphomonas neptunium (strain ATCC 15444).